The following is an 820-amino-acid chain: Leucine--tRNA ligase (820 aa).

The 'HIGH' region signature appears at Pro-40 to His-51. Residues Lys-601 to Ser-605 carry the 'KMSKS' region motif. ATP is bound at residue Lys-604.

It belongs to the class-I aminoacyl-tRNA synthetase family.

It is found in the cytoplasm. It catalyses the reaction tRNA(Leu) + L-leucine + ATP = L-leucyl-tRNA(Leu) + AMP + diphosphate. This Chlamydia caviae (strain ATCC VR-813 / DSM 19441 / 03DC25 / GPIC) (Chlamydophila caviae) protein is Leucine--tRNA ligase.